We begin with the raw amino-acid sequence, 216 residues long: Urease accessory protein UreG (216 aa).

A GTP-binding site is contributed by 25–32 (GPVGSGKT).

Belongs to the SIMIBI class G3E GTPase family. UreG subfamily. Homodimer. UreD, UreF and UreG form a complex that acts as a GTP-hydrolysis-dependent molecular chaperone, activating the urease apoprotein by helping to assemble the nickel containing metallocenter of UreC. The UreE protein probably delivers the nickel.

It is found in the cytoplasm. Functionally, facilitates the functional incorporation of the urease nickel metallocenter. This process requires GTP hydrolysis, probably effectuated by UreG. The sequence is that of Urease accessory protein UreG from Burkholderia pseudomallei (strain 1710b).